The sequence spans 311 residues: RNA polymerase sigma factor SigA4 (311 aa).

Residues 78–148 (MLKANLRLVV…TRAIDNHART (71 aa)) are sigma-70 factor domain-2. Positions 102–105 (DLIQ) match the Interaction with polymerase core subunit RpoC motif. The segment at 157-234 (EKISRIKKMT…DPKSLEPMDA (78 aa)) is sigma-70 factor domain-3. Residues 247–304 (WLAHLTEREQQVLQLRFGLHDGEQHTLAEIGRRLNVSRERIRQVEARALQKLRVLSQQ) are sigma-70 factor domain-4. Positions 273 to 292 (LAEIGRRLNVSRERIRQVEA) form a DNA-binding region, H-T-H motif.

The protein belongs to the sigma-70 factor family.

The protein localises to the cytoplasm. In terms of biological role, sigma factors are initiation factors that promote the attachment of RNA polymerase to specific initiation sites and are then released. The sequence is that of RNA polymerase sigma factor SigA4 (sigA4) from Synechococcus elongatus (strain ATCC 33912 / PCC 7942 / FACHB-805) (Anacystis nidulans R2).